The following is a 148-amino-acid chain: Urease accessory protein UreE (148 aa).

It belongs to the UreE family.

Its subcellular location is the cytoplasm. In terms of biological role, involved in urease metallocenter assembly. Binds nickel. Probably functions as a nickel donor during metallocenter assembly. This Bacillus sp. (strain TB-90) protein is Urease accessory protein UreE.